Consider the following 452-residue polypeptide: Ribosome biogenesis protein YTM1 (452 aa).

Residues 17-98 (IVSQPVVFTT…EETLEIEYIE (82 aa)) are ubiquitin-like (UBL) domain. WD repeat units lie at residues 110–148 (PHED…TASI), 150–195 (AHPA…NPMA), and 208–247 (LHTA…TDEV). The interval 245–269 (DEVPEPALNERDRSKKRRRVEEGEV) is disordered. Positions 252-269 (LNERDRSKKRRRVEEGEV) are enriched in basic and acidic residues. 4 WD repeats span residues 282–322 (SHTA…CSHT), 325–364 (ASEK…TILT), 371–411 (MHPS…SAMA), and 418–452 (GSGQ…EQKV).

The protein belongs to the WD repeat WDR12/YTM1 family. Component of the NOP7 complex, composed of ERB1, NOP7 and YTM1. The complex is held together by ERB1, which interacts with NOP7 via its N-terminal domain and with YTM1 via a high-affinity interaction between the seven-bladed beta-propeller domains of the 2 proteins. The NOP7 complex associates with the 66S pre-ribosome. Interacts (via UBL domain) with MDN1 (via VWFA/MIDAS domain).

The protein localises to the nucleus. The protein resides in the nucleolus. It localises to the nucleoplasm. Component of the NOP7 complex, which is required for maturation of the 25S and 5.8S ribosomal RNAs and formation of the 60S ribosome. In Laccaria bicolor (strain S238N-H82 / ATCC MYA-4686) (Bicoloured deceiver), this protein is Ribosome biogenesis protein YTM1.